The primary structure comprises 174 residues: NADH-quinone oxidoreductase subunit B 2 (174 aa).

[4Fe-4S] cluster-binding residues include cysteine 53, cysteine 54, cysteine 118, and cysteine 148.

It belongs to the complex I 20 kDa subunit family. As to quaternary structure, NDH-1 is composed of 14 different subunits. Subunits NuoB, C, D, E, F, and G constitute the peripheral sector of the complex. [4Fe-4S] cluster serves as cofactor.

The protein resides in the cell inner membrane. It catalyses the reaction a quinone + NADH + 5 H(+)(in) = a quinol + NAD(+) + 4 H(+)(out). In terms of biological role, NDH-1 shuttles electrons from NADH, via FMN and iron-sulfur (Fe-S) centers, to quinones in the respiratory chain. Couples the redox reaction to proton translocation (for every two electrons transferred, four hydrogen ions are translocated across the cytoplasmic membrane), and thus conserves the redox energy in a proton gradient. The polypeptide is NADH-quinone oxidoreductase subunit B 2 (Cereibacter sphaeroides (strain ATCC 17025 / ATH 2.4.3) (Rhodobacter sphaeroides)).